We begin with the raw amino-acid sequence, 417 residues long: Phosphoglycerate kinase (417 aa).

(2R)-3-phosphoglycerate-binding residues include V23, D24, F25, N26, Q38, R39, S62, H63, G65, R66, L121, R122, H169, and R170. ADP is bound at residue G213. Residue G213 coordinates CDP. Residues A214 and K215 each coordinate AMP. A214 lines the ATP pocket. A214 lines the Mg(2+) pocket. D218 contacts CDP. D218 is a binding site for Mg(2+). K219 is an AMP binding site. ATP is bound at residue K219. G237 serves as a coordination point for ADP. G237 is a binding site for CDP. G238 and G312 together coordinate AMP. G238 and G312 together coordinate ATP. CDP contacts are provided by G337 and F342. An ADP-binding site is contributed by F342. Position 343 (E343) interacts with AMP. The ATP site is built by E343, D374, and T375. Residue D374 coordinates Mg(2+).

It belongs to the phosphoglycerate kinase family. Monomer. Mg(2+) is required as a cofactor.

Its subcellular location is the cytoplasm. The protein resides in the mitochondrion. The enzyme catalyses (2R)-3-phosphoglycerate + ATP = (2R)-3-phospho-glyceroyl phosphate + ADP. The protein operates within carbohydrate degradation; glycolysis; pyruvate from D-glyceraldehyde 3-phosphate: step 2/5. Catalyzes one of the two ATP producing reactions in the glycolytic pathway via the reversible conversion of 1,3-diphosphoglycerate to 3-phosphoglycerate. Both L- and D- forms of purine and pyrimidine nucleotides can be used as substrates, but the activity is much lower on pyrimidines. Negatively regulates the biosynthesis of acetyl-CoA from pyruvate in the mitochondrion. In Yarrowia lipolytica (strain CLIB 122 / E 150) (Yeast), this protein is Phosphoglycerate kinase (PGK1).